A 251-amino-acid chain; its full sequence is MRYLKRITIYISLLILVSGCGNNKEAEIKQNFNKTLSMYPIKNLENFYDKEGFRDEEFDKDDKGTWIINSKMIVEPKGKDMEARGMVLHINRNTRTTKGDFIIKRITEDNKGIPDVKDKKYPVKMENNKIIPTKQIKDKKLKKEIENFKFFVQYGNFKNLKHYKDGEISYNPNVPSYSAKYQLSNNGYNVKQLRKRYDIPTNQAPKLLLKGTGDLKGSSVGYNHLEFTFVENKKENIYFTDSINFNPSRGD.

The N-terminal stretch at 1-19 (MRYLKRITIYISLLILVSG) is a signal peptide. Residue Cys20 is the site of N-palmitoyl cysteine attachment. A lipid anchor (S-diacylglycerol cysteine) is attached at Cys20.

The protein belongs to the staphylococcal tandem lipoprotein family.

The protein localises to the cell membrane. This is an uncharacterized protein from Staphylococcus epidermidis (strain ATCC 12228 / FDA PCI 1200).